Reading from the N-terminus, the 482-residue chain is Kynurenine 3-monooxygenase (482 aa).

It belongs to the aromatic-ring hydroxylase family. KMO subfamily. The cofactor is FAD.

The protein localises to the mitochondrion outer membrane. The enzyme catalyses L-kynurenine + NADPH + O2 + H(+) = 3-hydroxy-L-kynurenine + NADP(+) + H2O. It participates in cofactor biosynthesis; NAD(+) biosynthesis; quinolinate from L-kynurenine: step 1/3. Its function is as follows. Catalyzes the hydroxylation of L-kynurenine (L-Kyn) to form 3-hydroxy-L-kynurenine (L-3OHKyn). Required for synthesis of quinolinic acid. The chain is Kynurenine 3-monooxygenase from Phaeosphaeria nodorum (strain SN15 / ATCC MYA-4574 / FGSC 10173) (Glume blotch fungus).